We begin with the raw amino-acid sequence, 662 residues long: Methionine--tRNA ligase (662 aa).

The 'HIGH' region signature appears at 13 to 23 (PYTNGPCHLGH). Zn(2+) is bound by residues cysteine 144, cysteine 147, cysteine 156, and cysteine 160. A 'KMSKS' region motif is present at residues 326-330 (KFSKS). Lysine 329 serves as a coordination point for ATP. The tRNA-binding domain maps to 564-662 (DFSKVEIKTG…KPVEPGTKIR (99 aa)).

It belongs to the class-I aminoacyl-tRNA synthetase family. MetG type 1 subfamily. As to quaternary structure, homodimer. Zn(2+) is required as a cofactor.

The protein resides in the cytoplasm. It catalyses the reaction tRNA(Met) + L-methionine + ATP = L-methionyl-tRNA(Met) + AMP + diphosphate. In terms of biological role, is required not only for elongation of protein synthesis but also for the initiation of all mRNA translation through initiator tRNA(fMet) aminoacylation. This chain is Methionine--tRNA ligase, found in Methanoregula boonei (strain DSM 21154 / JCM 14090 / 6A8).